Here is a 129-residue protein sequence, read N- to C-terminus: DNA-directed RNA polymerase subunit omega (129 aa).

Positions 76 to 101 (EVDEPEPDPVTLAASAADGEDDDQPE) are disordered.

This sequence belongs to the RNA polymerase subunit omega family. The RNAP catalytic core consists of 2 alpha, 1 beta, 1 beta' and 1 omega subunit. When a sigma factor is associated with the core the holoenzyme is formed, which can initiate transcription.

It carries out the reaction RNA(n) + a ribonucleoside 5'-triphosphate = RNA(n+1) + diphosphate. Promotes RNA polymerase assembly. Latches the N- and C-terminal regions of the beta' subunit thereby facilitating its interaction with the beta and alpha subunits. The sequence is that of DNA-directed RNA polymerase subunit omega from Agrobacterium fabrum (strain C58 / ATCC 33970) (Agrobacterium tumefaciens (strain C58)).